Consider the following 122-residue polypeptide: Large ribosomal subunit protein bL12 (122 aa).

It belongs to the bacterial ribosomal protein bL12 family. In terms of assembly, homodimer. Part of the ribosomal stalk of the 50S ribosomal subunit. Forms a multimeric L10(L12)X complex, where L10 forms an elongated spine to which 2 to 4 L12 dimers bind in a sequential fashion. Binds GTP-bound translation factors.

Its function is as follows. Forms part of the ribosomal stalk which helps the ribosome interact with GTP-bound translation factors. Is thus essential for accurate translation. This Lacticaseibacillus casei (strain BL23) (Lactobacillus casei) protein is Large ribosomal subunit protein bL12.